The sequence spans 352 residues: Chorismate synthase (352 aa).

2 residues coordinate NADP(+): Arg48 and Arg54. Residues 125 to 127, 238 to 239, Ala278, 293 to 297, and Arg319 each bind FMN; these read RAS, NA, and KPASS.

This sequence belongs to the chorismate synthase family. Homotetramer. The cofactor is FMNH2.

The catalysed reaction is 5-O-(1-carboxyvinyl)-3-phosphoshikimate = chorismate + phosphate. Its pathway is metabolic intermediate biosynthesis; chorismate biosynthesis; chorismate from D-erythrose 4-phosphate and phosphoenolpyruvate: step 7/7. In terms of biological role, catalyzes the anti-1,4-elimination of the C-3 phosphate and the C-6 proR hydrogen from 5-enolpyruvylshikimate-3-phosphate (EPSP) to yield chorismate, which is the branch point compound that serves as the starting substrate for the three terminal pathways of aromatic amino acid biosynthesis. This reaction introduces a second double bond into the aromatic ring system. The chain is Chorismate synthase from Coxiella burnetii (strain RSA 493 / Nine Mile phase I).